We begin with the raw amino-acid sequence, 378 residues long: Probable pectin lyase A (378 aa).

A signal peptide spans 1–18; sequence MKYQDLLAIAGCIANAGA. 2 disulfide bridges follow: cysteine 81–cysteine 100 and cysteine 90–cysteine 224. The N-linked (GlcNAc...) asparagine glycan is linked to asparagine 127. Arginine 254 is a catalytic residue. An intrachain disulfide couples cysteine 321 to cysteine 329.

The protein belongs to the polysaccharide lyase 1 family.

Its subcellular location is the secreted. It carries out the reaction Eliminative cleavage of (1-&gt;4)-alpha-D-galacturonan methyl ester to give oligosaccharides with 4-deoxy-6-O-methyl-alpha-D-galact-4-enuronosyl groups at their non-reducing ends.. Its function is as follows. Pectinolytic enzymes consist of four classes of enzymes: pectin lyase, polygalacturonase, pectin methylesterase and rhamnogalacturonase. Among pectinolytic enzymes, pectin lyase is the most important in depolymerization of pectin, since it cleaves internal glycosidic bonds of highly methylated pectins. This chain is Probable pectin lyase A (pelA), found in Aspergillus fumigatus (strain CBS 144.89 / FGSC A1163 / CEA10) (Neosartorya fumigata).